The sequence spans 176 residues: Scytalone dehydratase-like protein AacuK (176 aa).

Positions 26 and 46 each coordinate substrate. Catalysis depends on residues histidine 81 and histidine 107.

This sequence belongs to the scytalone dehydratase family.

It participates in secondary metabolite biosynthesis. Its function is as follows. Scytalone dehydratase-like protein; part of the gene cluster that mediates the biosynthesis of the tetrahydroxanthone dimer secalonic acid D. The pathway begins with the synthesis of atrochrysone thioester by the polyketide synthase AacuL. The atrochrysone carboxyl ACP thioesterase AacuM then breaks the thioester bond and releases the atrochrysone carboxylic acid from AacuL. Atrochrysone carboxylic acid is decarboxylated by the decarboxylase AacuI, and oxidized by the anthrone oxygenase AacuG to yield emodin. Emodin is then reduced to emodin hydroquinone by a yet unidentified oxidoreductase. A-ring reduction by the short chain dehydrogenase AacuN, dehydration by the scytalone dehydratase-like protein AacuK and probable spontaneous re-oxidation, results in overall deoxygenation to chrysophanol. Baeyer-Villiger oxidation by the Baeyer-Villiger monooxygenase (BVMO) AacuH then yields monodictyphenone. Monodictyphenone is transformed into compounds with the tetrahydroxanthone skeleton via methylesterification by the methyltransferase AacuQ, followed by the action of the flavin-dependent monooxygenase AacuC, the isomerase AacuP, and the short chain dehydrogenase/reductase AacuF or AacuD. AacuF and AacuD should accept the same compound as a substrate but perform the ketoreduction with a different stereoselectivity, thus yielding blennolides B and A, respectively. In the final step of the biosynthesis, the cytochrome P450 monooxygenase AacuE accepts blennolide B and/or blennolide A to conduct the dimerization reaction to furnish the tetrahydroxanthone dimers, secalonic acids D, B, and F. The chain is Scytalone dehydratase-like protein AacuK from Aspergillus aculeatus (strain ATCC 16872 / CBS 172.66 / WB 5094).